We begin with the raw amino-acid sequence, 1111 residues long: Myosin IB heavy chain (1111 aa).

In terms of domain architecture, Myosin motor spans 9–691 (QGTDDLVMLP…TVFLLEEALD (683 aa)). 102–109 (GESGAGKT) contributes to the ATP binding site. Position 332 is a phosphoserine (Ser-332). The segment at 547–627 (GSLQKKRPTT…GFAYRNTFDK (81 aa)) is actin-binding. Residues 729-913 (KERQRNSIDR…KGLIGTIASG (185 aa)) form the TH1 domain. Residues 910–1058 (IASGLPSSTD…PAPQPSRPTA (149 aa)) are disordered. A compositionally biased stretch (polar residues) spans 914-928 (LPSSTDSTPKNYNPN). 3 stretches are compositionally biased toward low complexity: residues 929–944 (SMSQ…QSAG), 952–967 (GAGQ…QQRP), and 991–1012 (PMGA…LPQP). A compositionally biased stretch (gly residues) spans 1017 to 1040 (GAPGGRGAPMGRGAPGGGPAGAGG). The 59-residue stretch at 1053–1111 (PSRPTAKALYDYDASSTDELSFKEGDIIFIVQKDNGGWTQGELKSGQKGWAPTNYLQYN) folds into the SH3 domain.

Belongs to the TRAFAC class myosin-kinesin ATPase superfamily. Myosin family. In terms of assembly, myosin I heavy chain is single-headed. Dimer of a heavy and a light chain. Inability to self-assemble into filaments.

It is found in the cell projection. The protein resides in the pseudopodium. It localises to the cytoplasm. Its subcellular location is the cell cortex. Myosin is a protein that binds to actin and has ATPase activity that is activated by actin. Myosin IB may have a role in chemotaxis and aggregation; it could serve to stabilize and even retract cortical structures, such as pseudopods and lamellopods. Involved in the whole cell motility of aggregation-stages cells. Overexpression results in significant decrease in the rate of cellular translocation and fluid-phase pinocytosis and abnormalities in the normal rearrangement of the actin cytoskeleton. The protein is Myosin IB heavy chain (myoB) of Dictyostelium discoideum (Social amoeba).